Here is a 257-residue protein sequence, read N- to C-terminus: NAD-capped RNA hydrolase NudC (257 aa).

Residues K25 and R69 each coordinate substrate. 2 residues coordinate Zn(2+): C98 and C101. Residue E111 coordinates substrate. Residues C116 and C119 each contribute to the Zn(2+) site. Y124 contributes to the substrate binding site. The Nudix hydrolase domain maps to 125-248 (PQIAPCIIVA…TVARRLIEDT (124 aa)). A divalent metal cation contacts are provided by A158, E174, and E178. The Nudix box motif lies at 159 to 180 (GFVEVGETLEQAVAREVMEESG). 192–199 (QPWPFPQS) lines the substrate pocket. Residue E219 coordinates a divalent metal cation. Residue A241 coordinates substrate.

This sequence belongs to the Nudix hydrolase family. NudC subfamily. As to quaternary structure, homodimer. Mg(2+) serves as cofactor. It depends on Mn(2+) as a cofactor. The cofactor is Zn(2+).

The enzyme catalyses a 5'-end NAD(+)-phospho-ribonucleoside in mRNA + H2O = a 5'-end phospho-adenosine-phospho-ribonucleoside in mRNA + beta-nicotinamide D-ribonucleotide + 2 H(+). It carries out the reaction NAD(+) + H2O = beta-nicotinamide D-ribonucleotide + AMP + 2 H(+). It catalyses the reaction NADH + H2O = reduced beta-nicotinamide D-ribonucleotide + AMP + 2 H(+). MRNA decapping enzyme that specifically removes the nicotinamide adenine dinucleotide (NAD) cap from a subset of mRNAs by hydrolyzing the diphosphate linkage to produce nicotinamide mononucleotide (NMN) and 5' monophosphate mRNA. The NAD-cap is present at the 5'-end of some mRNAs and stabilizes RNA against 5'-processing. Has preference for mRNAs with a 5'-end purine. Catalyzes the hydrolysis of a broad range of dinucleotide pyrophosphates. This Escherichia coli O157:H7 protein is NAD-capped RNA hydrolase NudC.